The sequence spans 155 residues: SsrA-binding protein (155 aa).

This sequence belongs to the SmpB family.

The protein resides in the cytoplasm. Functionally, required for rescue of stalled ribosomes mediated by trans-translation. Binds to transfer-messenger RNA (tmRNA), required for stable association of tmRNA with ribosomes. tmRNA and SmpB together mimic tRNA shape, replacing the anticodon stem-loop with SmpB. tmRNA is encoded by the ssrA gene; the 2 termini fold to resemble tRNA(Ala) and it encodes a 'tag peptide', a short internal open reading frame. During trans-translation Ala-aminoacylated tmRNA acts like a tRNA, entering the A-site of stalled ribosomes, displacing the stalled mRNA. The ribosome then switches to translate the ORF on the tmRNA; the nascent peptide is terminated with the 'tag peptide' encoded by the tmRNA and targeted for degradation. The ribosome is freed to recommence translation, which seems to be the essential function of trans-translation. This is SsrA-binding protein from Streptococcus suis (strain 98HAH33).